The following is a 588-amino-acid chain: MQHRQDNLLANRNLLPGMVSGQYAFRIRTLSQVVRYFSLLPCLCILSFSSPAAMLSPGDRSAIQQQQQQLLDENQRQRDALERSAPLTITPSPETSAGTEGPCFTVSRIVVSGATRLTSAETDRLVAPWVNQCLNITGLTAVTDAVTDGYIRRGYITSRAFLTEQDLSGGVLHITVMEGRLQQIRAEGADLPGRTLKMVFPGMEGKVLNLRDIEQGMEQINRLRTESVQIEISPGDREGWSVVTLTALPEWPVTGSVGIDNSGQKNTGTGQLNGVLSFNNPLGLADNWFVRGGRSSDFSVSHDARNFAAGVSLPYGYTLVDYTYSWSDYLSTIDNRGWLWRSTGDLQTHRLGLSHVLFRNGNMKTALTGGLQHRIIHNYLDDVLLQGSSRKLTSFSVGLNHTHKFLGGVGTLNPVFTRGMPWFGAESDHGKRGDLPVNQFRKWSVSASFQRPVTDRVWWLTSAYAQWSPDRLHGVEQLSLGGESSVRGFKEQYISGNNGGYLRNELSWSLFSLPYVGTVRAVTALDGGWLHSDRDDPYSSGTLWGAAAGLSTTSGHVSGSFTAGLPLVYPDWLAPDHLTVYWRVAVAF.

The chain crosses the membrane as a helical span at residues 33–55 (VVRYFSLLPCLCILSFSSPAAML). The POTRA domain occupies 104-179 (FTVSRIVVSG…GVLHITVMEG (76 aa)).

It belongs to the TPS (TC 1.B.20) family.

It is found in the cell outer membrane. Functionally, potential outer membrane protein component of a toxin-immunity protein module, which functions as a cellular contact-dependent growth inhibition (CDI) system. CDI modules allow bacteria to communicate with and inhibit the growth of closely related neighboring bacteria in a contact-dependent fashion. This protein may be required for secretion and assembly of the CdiA toxin protein. Its function is as follows. Probable member of a two partner secretion pathway (TPS) in which it mediates the secretion of CdiA. This chain is Outer membrane transporter CdiB, found in Escherichia coli O6:K15:H31 (strain 536 / UPEC).